The chain runs to 107 residues: Nucleoid-associated protein RC1_2305 (107 aa).

Belongs to the YbaB/EbfC family. As to quaternary structure, homodimer.

Its subcellular location is the cytoplasm. It localises to the nucleoid. In terms of biological role, binds to DNA and alters its conformation. May be involved in regulation of gene expression, nucleoid organization and DNA protection. In Rhodospirillum centenum (strain ATCC 51521 / SW), this protein is Nucleoid-associated protein RC1_2305.